Consider the following 141-residue polypeptide: Protein X (141 aa).

Over residues 25 to 48 the composition is skewed to low complexity; that stretch reads SSGPSFPRPAAGSAASSASSPSPS. The interval 25-52 is disordered; that stretch reads SSGPSFPRPAAGSAASSASSPSPSDESD. The tract at residues 68-113 is mitochondrial targeting sequence; sequence PCCLVFTCADLRTMDSTVNFVSWHANRQLGMPSKDLWTPYIKDQLL.

It belongs to the orthohepadnavirus protein X family. May form homodimer. May interact with host CEBPA, CFLAR, CREB1, DDB1, E4F1, HBXIP, HSPD1/HSP60, NFKBIA, POLR2E and SMAD4. Interacts with host SMC5-SMC6 complex and induces its degradation. Interacts with host TRPC4AP; leading to prevent ubiquitination of TRPC4AP. Interacts with host PLSCR1; this interaction promotes ubiquitination and degradation of HBx and impairs HBx-mediated cell proliferation. In terms of processing, a fraction may be phosphorylated in insect cells and HepG2 cells, a human hepatoblastoma cell line. Phosphorylated in vitro by host protein kinase C or mitogen-activated protein kinase. N-acetylated in insect cells.

It localises to the host cytoplasm. It is found in the host nucleus. Its subcellular location is the host mitochondrion. Multifunctional protein that plays a role in silencing host antiviral defenses and promoting viral transcription. Does not seem to be essential for HBV infection. May be directly involved in development of cirrhosis and liver cancer (hepatocellular carcinoma). Most of cytosolic activities involve modulation of cytosolic calcium. The effect on apoptosis is controversial depending on the cell types in which the studies have been conducted. May induce apoptosis by localizing in mitochondria and causing loss of mitochondrial membrane potential. May also modulate apoptosis by binding host CFLAR, a key regulator of the death-inducing signaling complex (DISC). Promotes viral transcription by using the host E3 ubiquitin ligase DDB1 to target the SMC5-SMC6 complex to proteasomal degradation. This host complex would otherwise bind to viral episomal DNA, and prevents its transcription. Moderately stimulates transcription of many different viral and cellular transcription elements. Promoters and enhancers stimulated by HBx contain DNA binding sites for NF-kappa-B, AP-1, AP-2, c-EBP, ATF/CREB, or the calcium-activated factor NF-AT. In Marmota monax (Woodchuck), this protein is Protein X.